Here is a 506-residue protein sequence, read N- to C-terminus: Maturase K (506 aa).

Belongs to the intron maturase 2 family. MatK subfamily.

Its subcellular location is the plastid. It localises to the chloroplast. In terms of biological role, usually encoded in the trnK tRNA gene intron. Probably assists in splicing its own and other chloroplast group II introns. The sequence is that of Maturase K from Trifolium resupinatum (Persian clover).